Consider the following 450-residue polypeptide: Molybdate-anion transporter (450 aa).

12 helical membrane-spanning segments follow: residues 1 to 21, 43 to 63, 79 to 99, 128 to 148, 174 to 194, 195 to 215, 249 to 269, 278 to 298, 311 to 331, 344 to 364, 376 to 396, and 409 to 429; these read MLVT…GLEL, LDFY…APYL, ILYV…SSLV, FVLL…FSAF, AAFW…AVAS, WIGL…ALAG, VLLL…FVFL, GAPL…GSSL, PMHL…MLTF, FIAF…MSFL, GVLN…LLVL, and FSIC…LFTV.

This sequence belongs to the major facilitator superfamily. Expressed ubiquitously but at relatively higher levels in the olfactory bulb and the skeletal muscle.

It is found in the cell membrane. Functionally, mediates high-affinity intracellular uptake of the rare oligo-element molybdenum. This chain is Molybdate-anion transporter (MFSD5), found in Homo sapiens (Human).